Here is a 327-residue protein sequence, read N- to C-terminus: Zinc transport protein ZntB (327 aa).

Residues 1 to 273 (MEAIKGSDVN…ARRTYTMSLM (273 aa)) are Cytoplasmic-facing. Residues 274–294 (AMVFLPSTFLTGLFGVNLGGI) traverse the membrane as a helical segment. The Periplasmic portion of the chain corresponds to 295-300 (PGGGWR). Residues 301-321 (FGFSLFCILLVVLIGGVTLWL) form a helical membrane-spanning segment. Residues 322-327 (HRSKWL) are Cytoplasmic-facing.

It belongs to the CorA metal ion transporter (MIT) (TC 1.A.35) family.

It localises to the cell inner membrane. The catalysed reaction is Zn(2+)(out) + H(+)(out) = Zn(2+)(in) + H(+)(in). In terms of biological role, zinc transporter. Acts as a Zn(2+):proton symporter, which likely mediates zinc ion uptake. In Salmonella enteritidis PT4 (strain P125109), this protein is Zinc transport protein ZntB.